Consider the following 670-residue polypeptide: DNA ligase (670 aa).

NAD(+)-binding positions include 36-40 (DAQYD), 85-86 (SL), and E116. Catalysis depends on K118, which acts as the N6-AMP-lysine intermediate. R139, E174, K290, and K314 together coordinate NAD(+). C408, C411, C426, and C431 together coordinate Zn(2+). The BRCT domain maps to 591 to 670 (STDQTLSGKT…QDFVKLLQQQ (80 aa)).

It belongs to the NAD-dependent DNA ligase family. LigA subfamily. Mg(2+) serves as cofactor. The cofactor is Mn(2+).

The enzyme catalyses NAD(+) + (deoxyribonucleotide)n-3'-hydroxyl + 5'-phospho-(deoxyribonucleotide)m = (deoxyribonucleotide)n+m + AMP + beta-nicotinamide D-nucleotide.. Its function is as follows. DNA ligase that catalyzes the formation of phosphodiester linkages between 5'-phosphoryl and 3'-hydroxyl groups in double-stranded DNA using NAD as a coenzyme and as the energy source for the reaction. It is essential for DNA replication and repair of damaged DNA. The protein is DNA ligase of Desulforamulus reducens (strain ATCC BAA-1160 / DSM 100696 / MI-1) (Desulfotomaculum reducens).